We begin with the raw amino-acid sequence, 541 residues long: Halolysin-like extracellular serine protease Nep (541 aa).

Residues methionine 1 to alanine 33 constitute a signal peptide (tat-type signal). The propeptide occupies threonine 34–valine 121. A Peptidase S8 domain is found at glutamine 130–valine 405. Catalysis depends on charge relay system residues aspartate 157, histidine 198, and serine 351. The segment at leucine 403 to aspartate 453 is disordered. The span at aspartate 410–aspartate 432 shows a compositional bias: acidic residues.

Belongs to the peptidase S8 family. As to quaternary structure, monomer. Exported by the Tat system. The position of the signal peptide cleavage has not been experimentally proven. After transport across the membrane, the propeptide is probably processed autocatalytically, yielding the mature fully active protease.

Its subcellular location is the secreted. Its activity is regulated as follows. Dependent on high salt concentrations for activity and stability. Strongly inhibited by the serine protease inhibitors diisopropyl fluorophosphate (DFP), phenylmethyl sulfonylfluoride (PMSF) and chymostatin. Also inhibited by denaturing agents such as SDS, urea, and HCl guanidinium. Activated by thiol-containing reducing agents such as dithiotreitol (DTT) and 2-mercaptoethanol. Functionally, serine protease that hydrolyzes large proteins such as casein and gelatin. Cleaves preferentially at the carboxyl terminus of Phe, Tyr or Leu. Is also able to catalyze peptide synthesis under different salt concentrations in the presence of dimethyl sulfoxide (DMSO). The sequence is that of Halolysin-like extracellular serine protease Nep from Natrialba magadii.